A 154-amino-acid polypeptide reads, in one-letter code: 6,7-dimethyl-8-ribityllumazine synthase (154 aa).

5-amino-6-(D-ribitylamino)uracil is bound by residues Phe22, 56–58 (AFE), and 80–82 (TVI). (2S)-2-hydroxy-3-oxobutyl phosphate is bound at residue 85 to 86 (AT). His88 functions as the Proton donor in the catalytic mechanism. Residue Phe113 coordinates 5-amino-6-(D-ribitylamino)uracil. Arg127 is a (2S)-2-hydroxy-3-oxobutyl phosphate binding site.

It belongs to the DMRL synthase family. In terms of assembly, forms an icosahedral capsid composed of 60 subunits, arranged as a dodecamer of pentamers.

The enzyme catalyses (2S)-2-hydroxy-3-oxobutyl phosphate + 5-amino-6-(D-ribitylamino)uracil = 6,7-dimethyl-8-(1-D-ribityl)lumazine + phosphate + 2 H2O + H(+). Its pathway is cofactor biosynthesis; riboflavin biosynthesis; riboflavin from 2-hydroxy-3-oxobutyl phosphate and 5-amino-6-(D-ribitylamino)uracil: step 1/2. Functionally, catalyzes the formation of 6,7-dimethyl-8-ribityllumazine by condensation of 5-amino-6-(D-ribitylamino)uracil with 3,4-dihydroxy-2-butanone 4-phosphate. This is the penultimate step in the biosynthesis of riboflavin. The chain is 6,7-dimethyl-8-ribityllumazine synthase from Bacillus amyloliquefaciens (Bacillus velezensis).